The primary structure comprises 907 residues: Protein translocase subunit SecA (907 aa).

Residues Gln87, 105 to 109 (GEGKT), and Asp512 contribute to the ATP site. Residues Cys891, Cys893, Cys902, and His903 each coordinate Zn(2+).

The protein belongs to the SecA family. In terms of assembly, monomer and homodimer. Part of the essential Sec protein translocation apparatus which comprises SecA, SecYEG and auxiliary proteins SecDF-YajC and YidC. It depends on Zn(2+) as a cofactor.

The protein resides in the cell inner membrane. Its subcellular location is the cytoplasm. The catalysed reaction is ATP + H2O + cellular proteinSide 1 = ADP + phosphate + cellular proteinSide 2.. Its function is as follows. Part of the Sec protein translocase complex. Interacts with the SecYEG preprotein conducting channel. Has a central role in coupling the hydrolysis of ATP to the transfer of proteins into and across the cell membrane, serving both as a receptor for the preprotein-SecB complex and as an ATP-driven molecular motor driving the stepwise translocation of polypeptide chains across the membrane. The chain is Protein translocase subunit SecA from Shewanella loihica (strain ATCC BAA-1088 / PV-4).